Consider the following 42-residue polypeptide: AILGQDGSVWAQGLHLGGAKYVIAGEPGAVIRLGDYLLDQGL.

The protein belongs to the profilin family. Occurs in many kinds of cells as a complex with monomeric actin in a 1:1 ratio.

Its subcellular location is the cytoplasm. The protein localises to the cytoskeleton. Functionally, binds to actin and affects the structure of the cytoskeleton. At high concentrations, profilin prevents the polymerization of actin, whereas it enhances it at low concentrations. This Plantago lanceolata (English plantain) protein is Profilin.